Here is a 156-residue protein sequence, read N- to C-terminus: Small ribosomal subunit protein uS7 (156 aa).

The protein belongs to the universal ribosomal protein uS7 family. As to quaternary structure, part of the 30S ribosomal subunit. Contacts proteins S9 and S11.

One of the primary rRNA binding proteins, it binds directly to 16S rRNA where it nucleates assembly of the head domain of the 30S subunit. Is located at the subunit interface close to the decoding center, probably blocks exit of the E-site tRNA. In Photobacterium profundum (strain SS9), this protein is Small ribosomal subunit protein uS7.